Reading from the N-terminus, the 273-residue chain is Urease accessory protein UreD (273 aa).

The protein belongs to the UreD family. As to quaternary structure, ureD, UreF and UreG form a complex that acts as a GTP-hydrolysis-dependent molecular chaperone, activating the urease apoprotein by helping to assemble the nickel containing metallocenter of UreC. The UreE protein probably delivers the nickel.

The protein resides in the cytoplasm. Functionally, required for maturation of urease via the functional incorporation of the urease nickel metallocenter. This Rhizobium leguminosarum bv. viciae protein is Urease accessory protein UreD.